A 157-amino-acid polypeptide reads, in one-letter code: Ribonuclease 8 (157 aa).

An N-terminal signal peptide occupies residues 1–30; that stretch reads MAPARAGCCPLLLLLLLLLGLWVAEVLVSA. His-45 functions as the Proton acceptor in the catalytic mechanism. Cystine bridges form between Cys-53-Cys-96, Cys-67-Cys-121, Cys-85-Cys-136, and Cys-92-Cys-99. Substrate-binding positions include 68 to 72 and Lys-93; that span reads KDLNT. The Proton donor role is filled by His-152.

The protein belongs to the pancreatic ribonuclease family.

The protein localises to the secreted. In terms of biological role, has a low ribonuclease activity. This is Ribonuclease 8 (RNASE8) from Pan troglodytes (Chimpanzee).